Consider the following 246-residue polypeptide: Myelin protein P0 (246 aa).

A signal peptide spans M1–G27. Positions I28–T143 constitute an Ig-like V-type domain. Topologically, residues I28–P150 are extracellular. C48 and C125 are disulfide-bonded. N-linked (GlcNAc...) (complex) asparagine glycosylation occurs at N120. A helical membrane pass occupies residues V151–F178. At R179–K246 the chain is on the cytoplasmic side. The segment at A200 to K246 is disordered. Over residues A231–K246 the composition is skewed to basic and acidic residues.

The protein belongs to the myelin P0 protein family. N-glycan is sulfated. As to expression, found only in peripheral nervous system Schwann cells.

The protein localises to the cell membrane. Creation of an extracellular membrane face which guides the wrapping process and ultimately compacts adjacent lamellae. This is Myelin protein P0 (mpz) from Heterodontus francisci (Horn shark).